The following is a 439-amino-acid chain: S-layer protein (439 aa).

The signal sequence occupies residues M1–A30.

Glycosylated.

The protein resides in the secreted. It is found in the cell wall. Its subcellular location is the S-layer. Functionally, the S-layer is a paracrystalline mono-layered assembly of proteins which coat the surface of bacteria. This is S-layer protein (slpH) from Lactobacillus helveticus (Lactobacillus suntoryeus).